A 240-amino-acid chain; its full sequence is 1-(5-phosphoribosyl)-5-[(5-phosphoribosylamino)methylideneamino] imidazole-4-carboxamide isomerase (240 aa).

Catalysis depends on D8, which acts as the Proton acceptor. D129 acts as the Proton donor in catalysis.

The protein belongs to the HisA/HisF family.

It localises to the cytoplasm. The catalysed reaction is 1-(5-phospho-beta-D-ribosyl)-5-[(5-phospho-beta-D-ribosylamino)methylideneamino]imidazole-4-carboxamide = 5-[(5-phospho-1-deoxy-D-ribulos-1-ylimino)methylamino]-1-(5-phospho-beta-D-ribosyl)imidazole-4-carboxamide. It participates in amino-acid biosynthesis; L-histidine biosynthesis; L-histidine from 5-phospho-alpha-D-ribose 1-diphosphate: step 4/9. The sequence is that of 1-(5-phosphoribosyl)-5-[(5-phosphoribosylamino)methylideneamino] imidazole-4-carboxamide isomerase from Dinoroseobacter shibae (strain DSM 16493 / NCIMB 14021 / DFL 12).